We begin with the raw amino-acid sequence, 647 residues long: Protein cueball (647 aa).

Positions 1–22 (MLWCPSVLVPLIAVAACLPVLA) are cleaved as a signal peptide. Over 23–534 (IGTPLEWEFA…CMTPSPWTSN (512 aa)) the chain is Extracellular. N-linked (GlcNAc...) asparagine glycans are attached at residues N80 and N106. LDL-receptor class B repeat units follow at residues 119–166 (RNLF…DVCR), 167–211 (RKLY…DQLS), and 212–257 (DRIF…TNDA). The N-linked (GlcNAc...) asparagine glycan is linked to N175. N316 carries an N-linked (GlcNAc...) asparagine glycan. EGF-like domains lie at 365–401 (DEKT…SRCE) and 436–473 (EISK…ERCE). Disulfide bonds link C376-C389, C391-C400, C440-C450, C444-C461, and C463-C472. N475 is a glycosylation site (N-linked (GlcNAc...) asparagine). A helical transmembrane segment spans residues 535–555 (VIIVLVLGIVSCFFLVAVIVH). The Cytoplasmic portion of the chain corresponds to 556-647 (GFRRLYKPKR…LIHNMDDDLY (92 aa)).

The protein belongs to the cueball family.

It is found in the cell membrane. Has a role in spermatogenesis and oogenesis. In Drosophila pseudoobscura pseudoobscura (Fruit fly), this protein is Protein cueball.